A 130-amino-acid chain; its full sequence is uncharacterized protein (130 aa).

The tract at residues 48–130 (RGYWPQGPPP…LIAAMEEDER (83 aa)) is disordered. Positions 80–107 (GGDGGGDAGAGPSGVAGTAAGGAGGDGA) are enriched in gly residues.

This is an uncharacterized protein from Aotus trivirgatus (Three-striped night monkey).